A 234-amino-acid chain; its full sequence is RNA chaperone ProQ (234 aa).

Basic and acidic residues predominate over residues 104-130 (LEEAKARVQAQRDARKREAAENGEKRE). A disordered region spans residues 104–186 (LEEAKARVQA…QRSTPVTSLE (83 aa)). A compositionally biased stretch (basic residues) spans 131–142 (PRRPRPAGKKPT). Composition is skewed to basic and acidic residues over residues 143 to 156 (ARRD…EVRK) and 163 to 176 (TSER…ETTE). The span at 177–186 (QRSTPVTSLE) shows a compositional bias: polar residues.

It belongs to the ProQ family.

The protein resides in the cytoplasm. RNA chaperone with significant RNA binding, RNA strand exchange and RNA duplexing activities. May regulate ProP activity through an RNA-based, post-transcriptional mechanism. This Edwardsiella ictaluri (strain 93-146) protein is RNA chaperone ProQ.